The sequence spans 68 residues: Large ribosomal subunit protein bL31 (68 aa).

Zn(2+)-binding residues include cysteine 16, cysteine 18, cysteine 36, and cysteine 39.

Belongs to the bacterial ribosomal protein bL31 family. Type A subfamily. As to quaternary structure, part of the 50S ribosomal subunit. Requires Zn(2+) as cofactor.

Binds the 23S rRNA. This Lachnospira eligens (strain ATCC 27750 / DSM 3376 / VPI C15-48 / C15-B4) (Eubacterium eligens) protein is Large ribosomal subunit protein bL31.